A 190-amino-acid chain; its full sequence is MPKASEVKKNAAIEHNDKVYVVKDINKLTPSGRAGASLYRMRLYEVTTGAKADESFKADEMIKTADFVRQPVTFSYIDGDEYVFMNSEDYTPYNINKETIEEELLFIAEDTTGLQVMIVNGSAVGIELPPNVELVITETDPSIKGASASARTKPATLSTGLTVQVPEYISSGERIKISTSEHKFVSRADK.

The protein belongs to the elongation factor P family.

In Pseudoalteromonas atlantica (strain T6c / ATCC BAA-1087), this protein is Elongation factor P-like protein.